Here is a 102-residue protein sequence, read N- to C-terminus: Small ribosomal subunit protein uS10 (102 aa).

This sequence belongs to the universal ribosomal protein uS10 family. As to quaternary structure, part of the 30S ribosomal subunit.

In terms of biological role, involved in the binding of tRNA to the ribosomes. The chain is Small ribosomal subunit protein uS10 from Methylobacillus flagellatus (strain ATCC 51484 / DSM 6875 / VKM B-1610 / KT).